We begin with the raw amino-acid sequence, 113 residues long: Protein translation factor SUI1 homolog (113 aa).

The interval 1 to 24 is disordered; that stretch reads MSELDSQVPTAFDPFADANAEDSG. An N-acetylserine modification is found at serine 2.

The protein belongs to the SUI1 family.

In terms of biological role, probably involved in translation. This Brassica oleracea (Wild cabbage) protein is Protein translation factor SUI1 homolog.